Reading from the N-terminus, the 156-residue chain is Translation initiation factor IF-1, chloroplastic (156 aa).

Residues 1-81 (MASLSWWNPA…RRTTSIQCLS (81 aa)) constitute a chloroplast transit peptide. The tract at residues 51-79 (KSLLVKTQQQSKKKKNNSTNSRRTTSIQC) is disordered. Residues 67 to 76 (NSTNSRRTTS) show a composition bias toward low complexity. The 70-residue stretch at 82-151 (QEQKWTHEGS…SKGRIIYRLR (70 aa)) folds into the S1-like domain.

This sequence belongs to the IF-1 family. Component of the 30S ribosomal translation pre-initiation complex which assembles on the 30S ribosome in the order IF-2 and IF-3, IF-1 and N-formylmethionyl-tRNA(fMet); mRNA recruitment can occur at any time during PIC assembly.

The protein resides in the plastid. Its subcellular location is the chloroplast. One of the essential components for the initiation of protein synthesis. Stabilizes the binding of IF-2 and IF-3 on the 30S subunit to which N-formylmethionyl-tRNA(fMet) subsequently binds. Helps modulate mRNA selection, yielding the 30S pre-initiation complex (PIC). Upon addition of the 50S ribosomal subunit IF-1, IF-2 and IF-3 are released leaving the mature 70S translation initiation complex. This is Translation initiation factor IF-1, chloroplastic (infA) from Solanum lycopersicum (Tomato).